The chain runs to 244 residues: rRNA adenine N-6-methyltransferase (244 aa).

6 residues coordinate S-adenosyl-L-methionine: Asn11, Ile13, Gly38, Glu59, Asp84, and Asn101.

The protein belongs to the class I-like SAM-binding methyltransferase superfamily. rRNA adenine N(6)-methyltransferase family.

It catalyses the reaction adenosine(2085) in 23S rRNA + 2 S-adenosyl-L-methionine = N(6)-dimethyladenosine(2085) in 23S rRNA + 2 S-adenosyl-L-homocysteine + 2 H(+). In terms of biological role, this protein produces a dimethylation of the adenine residue at position 2085 in 23S rRNA, resulting in reduced affinity between ribosomes and macrolide-lincosamide-streptogramin B antibiotics. The polypeptide is rRNA adenine N-6-methyltransferase (ermM) (Staphylococcus epidermidis).